The chain runs to 238 residues: DNA repair protein RecO (238 aa).

It belongs to the RecO family.

In terms of biological role, involved in DNA repair and RecF pathway recombination. This is DNA repair protein RecO from Cereibacter sphaeroides (strain ATCC 17023 / DSM 158 / JCM 6121 / CCUG 31486 / LMG 2827 / NBRC 12203 / NCIMB 8253 / ATH 2.4.1.) (Rhodobacter sphaeroides).